Here is a 279-residue protein sequence, read N- to C-terminus: HTH-type transcriptional activator RhaS (279 aa).

Residues Gln175 to Gln273 form the HTH araC/xylS-type domain. DNA-binding regions (H-T-H motif) lie at residues Gly192–Thr213 and Ile240–Phe263.

As to quaternary structure, binds DNA as a dimer.

It localises to the cytoplasm. Its function is as follows. Activates expression of the rhaBAD and rhaT operons. This Pectobacterium carotovorum subsp. carotovorum (strain PC1) protein is HTH-type transcriptional activator RhaS.